A 782-amino-acid chain; its full sequence is Endonuclease MutS2 (782 aa).

336-343 (GPNTGGKT) lines the ATP pocket. One can recognise a Smr domain in the interval 707-782 (LDLRGYRYDE…GFGVTVVEIK (76 aa)).

It belongs to the DNA mismatch repair MutS family. MutS2 subfamily. In terms of assembly, homodimer. Binds to stalled ribosomes, contacting rRNA.

Functionally, endonuclease that is involved in the suppression of homologous recombination and thus may have a key role in the control of bacterial genetic diversity. Its function is as follows. Acts as a ribosome collision sensor, splitting the ribosome into its 2 subunits. Detects stalled/collided 70S ribosomes which it binds and splits by an ATP-hydrolysis driven conformational change. Acts upstream of the ribosome quality control system (RQC), a ribosome-associated complex that mediates the extraction of incompletely synthesized nascent chains from stalled ribosomes and their subsequent degradation. Probably generates substrates for RQC. This chain is Endonuclease MutS2, found in Staphylococcus saprophyticus subsp. saprophyticus (strain ATCC 15305 / DSM 20229 / NCIMB 8711 / NCTC 7292 / S-41).